A 210-amino-acid chain; its full sequence is Leucyl/phenylalanyl-tRNA--protein transferase (210 aa).

The protein belongs to the L/F-transferase family.

The protein resides in the cytoplasm. The catalysed reaction is N-terminal L-lysyl-[protein] + L-leucyl-tRNA(Leu) = N-terminal L-leucyl-L-lysyl-[protein] + tRNA(Leu) + H(+). The enzyme catalyses N-terminal L-arginyl-[protein] + L-leucyl-tRNA(Leu) = N-terminal L-leucyl-L-arginyl-[protein] + tRNA(Leu) + H(+). It catalyses the reaction L-phenylalanyl-tRNA(Phe) + an N-terminal L-alpha-aminoacyl-[protein] = an N-terminal L-phenylalanyl-L-alpha-aminoacyl-[protein] + tRNA(Phe). Functions in the N-end rule pathway of protein degradation where it conjugates Leu, Phe and, less efficiently, Met from aminoacyl-tRNAs to the N-termini of proteins containing an N-terminal arginine or lysine. The polypeptide is Leucyl/phenylalanyl-tRNA--protein transferase (Ruegeria sp. (strain TM1040) (Silicibacter sp.)).